The primary structure comprises 203 residues: Cryptic neisserial protein 1 (203 aa).

A signal peptide spans 1-18 (MRRAILLILTLTVGTSLA).

Belongs to the Cnp family.

Its subcellular location is the periplasm. The protein resides in the cytoplasm. The sequence is that of Cryptic neisserial protein 1 from Neisseria gonorrhoeae (strain ATCC 700825 / FA 1090).